We begin with the raw amino-acid sequence, 144 residues long: Cytochrome c oxidase subunit 4 isoform 1, mitochondrial (144 aa).

Residues 1–73 (SVVKSEDYAL…SFAEMNRGSN (73 aa)) are Mitochondrial matrix-facing. K4 bears the N6-acetyllysine; alternate mark. K4 carries the post-translational modification N6-succinyllysine; alternate. S31 and S33 each carry phosphoserine. K35 is modified (N6-acetyllysine; alternate). K35 is modified (N6-succinyllysine; alternate). At K42 the chain carries N6-acetyllysine. Residues 74 to 99 (EWKTVVGAAMFFIGFTAILIILEKRY) traverse the membrane as a helical segment. Residues 100–144 (VYGPLPHTFDKEWVAMQTKRMLDLKVNPVDGLASKWDYDKKEWKK) are Mitochondrial intermembrane-facing.

The protein belongs to the cytochrome c oxidase IV family. As to quaternary structure, component of the cytochrome c oxidase (complex IV, CIV), a multisubunit enzyme composed of 14 subunits. The complex is composed of a catalytic core of 3 subunits MT-CO1, MT-CO2 and MT-CO3, encoded in the mitochondrial DNA, and 11 supernumerary subunits COX4I, COX5A, COX5B, COX6A, COX6B, COX6C, COX7A, COX7B, COX7C, COX8 and NDUFA4, which are encoded in the nuclear genome. The complex exists as a monomer or a dimer and forms supercomplexes (SCs) in the inner mitochondrial membrane with NADH-ubiquinone oxidoreductase (complex I, CI) and ubiquinol-cytochrome c oxidoreductase (cytochrome b-c1 complex, complex III, CIII), resulting in different assemblies (supercomplex SCI(1)III(2)IV(1) and megacomplex MCI(2)III(2)IV(2)). Interacts with PHB2; the interaction decreases in absence of SPHK2. Interacts with AFG1L. Interacts with ABCB7; this interaction allows the regulation of cellular iron homeostasis and cellular reactive oxygen species (ROS) levels in cardiomyocytes. Interacts with FLVCR2; this interaction occurs in the absence of heme and is disrupted upon heme binding. Interacts with IRGC.

It is found in the mitochondrion inner membrane. It participates in energy metabolism; oxidative phosphorylation. Its function is as follows. Component of the cytochrome c oxidase, the last enzyme in the mitochondrial electron transport chain which drives oxidative phosphorylation. The respiratory chain contains 3 multisubunit complexes succinate dehydrogenase (complex II, CII), ubiquinol-cytochrome c oxidoreductase (cytochrome b-c1 complex, complex III, CIII) and cytochrome c oxidase (complex IV, CIV), that cooperate to transfer electrons derived from NADH and succinate to molecular oxygen, creating an electrochemical gradient over the inner membrane that drives transmembrane transport and the ATP synthase. Cytochrome c oxidase is the component of the respiratory chain that catalyzes the reduction of oxygen to water. Electrons originating from reduced cytochrome c in the intermembrane space (IMS) are transferred via the dinuclear copper A center (CU(A)) of subunit 2 and heme A of subunit 1 to the active site in subunit 1, a binuclear center (BNC) formed by heme A3 and copper B (CU(B)). The BNC reduces molecular oxygen to 2 water molecules using 4 electrons from cytochrome c in the IMS and 4 protons from the mitochondrial matrix. The polypeptide is Cytochrome c oxidase subunit 4 isoform 1, mitochondrial (COX4I1) (Aotus azarae (Azara's night monkey)).